The chain runs to 86 residues: Progonadoliberin-2 (86 aa).

The signal sequence occupies residues 1–24 (MVSVCRLLLVAALLLCLQAQLSFS). Gln-25 is subject to Pyrrolidone carboxylic acid. A Glycine amide modification is found at Gly-34.

Belongs to the GnRH family.

Its subcellular location is the secreted. Its function is as follows. Stimulates the secretion of gonadotropins. This Clarias gariepinus (North African catfish) protein is Progonadoliberin-2 (gnrh2).